The chain runs to 74 residues: Exodeoxyribonuclease 7 small subunit (74 aa).

Belongs to the XseB family. Heterooligomer composed of large and small subunits.

The protein localises to the cytoplasm. It carries out the reaction Exonucleolytic cleavage in either 5'- to 3'- or 3'- to 5'-direction to yield nucleoside 5'-phosphates.. Functionally, bidirectionally degrades single-stranded DNA into large acid-insoluble oligonucleotides, which are then degraded further into small acid-soluble oligonucleotides. This is Exodeoxyribonuclease 7 small subunit from Ruthia magnifica subsp. Calyptogena magnifica.